The chain runs to 174 residues: KELLDSDGDILRNGGTYYILPALRGKGGGLELAKTGDETCPLNVVQARGETKRGRPAIIWTPPRIAILTPAFYLNIEFQTKDLPACLREYSRLPREEEQHSEVKLAPKEEAAAFGXEKLKPYRDDYKIVYCEGGSDDDSCKDLGISIDDENNRRLVVKDGDPLAVRFVKAHRRG.

Disulfide bonds link Cys-40-Cys-86 and Cys-131-Cys-140.

This sequence belongs to the protease inhibitor I3 (leguminous Kunitz-type inhibitor) family. Heterodimer of an alpha and a beta chain linked by a disulfide bond.

Its function is as follows. Inhibits trypsin and chymotrypsin with a 1:1 stoichiometry, with dissociation constants of 1.56 nM and 120 nM respectively. Inhibits plasma kallikrein, factor XIIa and plasmin with dissociation constants of 5.0 nM, 150 nM and 18 nM respectively. Does not inhibit factor Xa, thrombin, tissue kallikrein or cysteine proteinases such as papain and bromelain. The polypeptide is Trypsin inhibitor (Enterolobium contortisiliquum (Pacara earpod tree)).